Reading from the N-terminus, the 139-residue chain is Maximins 4/H3 type 4 (139 aa).

The first 18 residues, Met1–Ala18, serve as a signal peptide directing secretion. Residues Arg19–Arg43 constitute a propeptide that is removed on maturation. Residue Asn70 is modified to Asparagine amide. A propeptide spanning residues Thr74–Arg118 is cleaved from the precursor. Ile138 carries the isoleucine amide modification.

This sequence belongs to the bombinin family. As to expression, expressed by the skin glands.

It is found in the secreted. Maximin-4 shows antibacterial activity against both Gram-positive and Gram-negative bacteria. It also shows antimicrobial activity against the fungus C.albicans, but not against A.flavus nor P.uticale. It has little hemolytic activity. It does not possess a significant cytotoxicity against tumor cell lines. It does not possess a significant anti-HIV activity. In terms of biological role, maximin-H3 shows antibacterial activity against both Gram-positive and Gram-negative bacteria. It also shows antimicrobial activity against the fungus C.albicans. Shows strong hemolytic activity. This is Maximins 4/H3 type 4 from Bombina maxima (Giant fire-bellied toad).